Here is a 482-residue protein sequence, read N- to C-terminus: O-phosphoseryl-tRNA(Sec) selenium transferase (482 aa).

Residues 1–36 are tetramerization; that stretch reads MKSSFGKKEGEYSRLVSKSSNKLLNSLWEKKQIPEE. Residue Arg-69 coordinates pyridoxal 5'-phosphate. Residues 90 to 100 form a phosphate loop (P-loop) region; that stretch reads GRSGNLLEIQP. Substrate is bound by residues Arg-91, Ser-92, and Gln-99. At Lys-277 the chain carries N6-(pyridoxal phosphate)lysine. Position 306 (Arg-306) interacts with substrate. Arg-388 is a binding site for tRNA. Positions 461–482 are disordered; sequence DRRGGSSGRRVPMNESFDMEND.

It belongs to the SepSecS family. As to quaternary structure, homotetramer formed by a catalytic dimer and a non-catalytic dimer serving as a binding platform that orients tRNASec for catalysis. Each tetramer binds the CCA ends of two tRNAs which point to the active sites of the catalytic dimer. It depends on pyridoxal 5'-phosphate as a cofactor.

The protein localises to the cytoplasm. It catalyses the reaction O-phospho-L-seryl-tRNA(Sec) + selenophosphate + H2O = L-selenocysteinyl-tRNA(Sec) + 2 phosphate. Its pathway is aminoacyl-tRNA biosynthesis; selenocysteinyl-tRNA(Sec) biosynthesis; selenocysteinyl-tRNA(Sec) from L-seryl-tRNA(Sec) (archaeal/eukaryal route): step 2/2. Functionally, converts O-phosphoseryl-tRNA(Sec) to selenocysteinyl-tRNA(Sec) required for selenoprotein biosynthesis. This is O-phosphoseryl-tRNA(Sec) selenium transferase (secs-1) from Caenorhabditis briggsae.